Consider the following 351-residue polypeptide: Peptide chain release factor 1 (351 aa).

Residue glutamine 229 is modified to N5-methylglutamine.

Belongs to the prokaryotic/mitochondrial release factor family. In terms of processing, methylated by PrmC. Methylation increases the termination efficiency of RF1.

It localises to the cytoplasm. Its function is as follows. Peptide chain release factor 1 directs the termination of translation in response to the peptide chain termination codons UAG and UAA. This is Peptide chain release factor 1 from Ruegeria pomeroyi (strain ATCC 700808 / DSM 15171 / DSS-3) (Silicibacter pomeroyi).